The following is a 142-amino-acid chain: Interleukin-3 (142 aa).

A signal peptide spans 1-18 (MSHLPILLLLLLVSPGLQ). N-linked (GlcNAc...) asparagine glycans are attached at residues N33, N88, and N108. The cysteines at positions 34 and 102 are disulfide-linked.

This sequence belongs to the IL-3 family. In terms of assembly, monomer. As to expression, activated T-cells, mast cells, natural killer cells.

The protein localises to the secreted. Functionally, granulocyte/macrophage colony-stimulating factors are cytokines that act in hematopoiesis by controlling the production, differentiation, and function of 2 related white cell populations of the blood, the granulocytes and the monocytes-macrophages. This CSF induces granulocytes, macrophages, mast cells, stem cells, erythroid cells, eosinophils and megakaryocytes. This chain is Interleukin-3 (IL3), found in Saguinus oedipus (Cotton-top tamarin).